The following is a 228-amino-acid chain: MNSKYDYFYEIDTRYDDDDYDDDELIIHISKEDEQFLNLNSTHYDCEDDEEKEEVHGFPELPDKLTCPPAVSLKHILMDEEAATSTTPTVILGDVSKHTRPCDVTSKYCNDSRCVSTKLDGIWTTKQCKLKHIGESEENYCLRLGTLRNDNEQIPKLKVNQHPSQCIIEFIATCMRDCGPKLKSLDIIVSPTETLSEHFANRFDLHKDIIENHSDNSMMDTELDYYYY.

Belongs to the ascovirus HvAv ORF57 family.

This is an uncharacterized protein from Trichoplusia ni ascovirus 2c (TnAV-2c).